The primary structure comprises 747 residues: Endoglucanase C (747 aa).

The signal sequence occupies residues 1–37 (MGHVTSPSKRYPASFKRAGSILGVSIALAAFSNVAAA). The CBM2 domain maps to 38–136 (GCEYVVTNSW…TVNGAACTGG (99 aa)). 3 disulfide bridges follow: C39–C133, C183–C214, and C193–C208. The CBM10 domain maps to 182 to 211 (QCNWYGTLYPLCVSTTSGWGYENNRSCISP). Residues 226–283 (GSSSPSSISSSSVRSSSSSSVVPPSSSSSSSVPSSSSSSVSSSSVVSSSSSSVSVPGT) form a disordered region. Positions 227-281 (SSSPSSISSSSVRSSSSSSVVPPSSSSSSSVPSSSSSSVSSSSVVSSSSSSVSVP) are enriched in low complexity. The segment at 280–747 (VPGTGVFRVN…TQLLHNMWGL (468 aa)) is catalytic. The active-site Proton donor is E502. E652 acts as the Nucleophile in catalysis.

This sequence belongs to the glycosyl hydrolase 5 (cellulase A) family.

It catalyses the reaction Endohydrolysis of (1-&gt;4)-beta-D-glucosidic linkages in cellulose, lichenin and cereal beta-D-glucans.. This Cellvibrio japonicus (strain Ueda107) (Pseudomonas fluorescens subsp. cellulosa) protein is Endoglucanase C (celC).